The sequence spans 489 residues: Protein nucleotidyltransferase YdiU (489 aa).

8 residues coordinate ATP: G88, G90, R91, K111, D123, G124, R174, and R181. The active-site Proton acceptor is the D250. Mg(2+) is bound by residues N251 and D260. ATP is bound at residue D260.

The protein belongs to the SELO family. Mg(2+) serves as cofactor. Mn(2+) is required as a cofactor.

The enzyme catalyses L-seryl-[protein] + ATP = 3-O-(5'-adenylyl)-L-seryl-[protein] + diphosphate. It carries out the reaction L-threonyl-[protein] + ATP = 3-O-(5'-adenylyl)-L-threonyl-[protein] + diphosphate. The catalysed reaction is L-tyrosyl-[protein] + ATP = O-(5'-adenylyl)-L-tyrosyl-[protein] + diphosphate. It catalyses the reaction L-histidyl-[protein] + UTP = N(tele)-(5'-uridylyl)-L-histidyl-[protein] + diphosphate. The enzyme catalyses L-seryl-[protein] + UTP = O-(5'-uridylyl)-L-seryl-[protein] + diphosphate. It carries out the reaction L-tyrosyl-[protein] + UTP = O-(5'-uridylyl)-L-tyrosyl-[protein] + diphosphate. Nucleotidyltransferase involved in the post-translational modification of proteins. It can catalyze the addition of adenosine monophosphate (AMP) or uridine monophosphate (UMP) to a protein, resulting in modifications known as AMPylation and UMPylation. In Vibrio cholerae serotype O1 (strain ATCC 39315 / El Tor Inaba N16961), this protein is Protein nucleotidyltransferase YdiU.